The sequence spans 582 residues: MDLKVKVDRSRDVSQPLDKLGPDETLKANSDQLRGTIAQSLADPITLAVDPSDNKLMKFHGIYQQDDRDIRDERRRQKLEAAYSFMARVRLPGGVCSTSQWLKLDELGRAYAGNTLRLTTRQTFQLHRVLKHHLRPALQGLREVVLDTKAACGDDTRGVMATVNPLVSKVHADVYALAKQASEHALHRTGAYREIWYEEERDPSTVKSAPDGSEEPFYGRTYMPRKFKIGFAVPPSNDIDVYAQDLGFIAIVKRGKLAGFNVAIGGGLGRTDQAPKTYPRLASVIGYVGVDKLFQTIDAVMSVQRDYGDRVDRLHARFKYTIDDKGLDWIKAEIERRLGFELAPAALYTFTSNSDPLGWVKGEDGHWHCTLFIQNGRVINHPGQPLMDGLREIARVHKGHFRITPNQNLIIADIAPEDRPAIEEVMKEYGLDAFETRSQLRLNSMACVALPTCGLAMAESERYLPDLISKIEPLLERYGLTDEPITIRMTGCPNGCARPYVAEIALTGRAPGKYNLYLGGGFHGERLNKMYLENVGESAILDALDKVLGHFARERTPGEHFGDFAIRAGYVAEVKEGRYFND.

Basic and acidic residues predominate over residues 1 to 12 (MDLKVKVDRSRD). A disordered region spans residues 1–26 (MDLKVKVDRSRDVSQPLDKLGPDETL). Cysteine 447, cysteine 453, cysteine 492, and cysteine 496 together coordinate [4Fe-4S] cluster. Cysteine 496 serves as a coordination point for siroheme.

The protein belongs to the nitrite and sulfite reductase 4Fe-4S domain family. As to quaternary structure, alpha(8)-beta(8). The alpha component is a flavoprotein, the beta component is a hemoprotein. Requires siroheme as cofactor. It depends on [4Fe-4S] cluster as a cofactor.

It catalyses the reaction hydrogen sulfide + 3 NADP(+) + 3 H2O = sulfite + 3 NADPH + 4 H(+). It participates in sulfur metabolism; hydrogen sulfide biosynthesis; hydrogen sulfide from sulfite (NADPH route): step 1/1. In terms of biological role, component of the sulfite reductase complex that catalyzes the 6-electron reduction of sulfite to sulfide. This is one of several activities required for the biosynthesis of L-cysteine from sulfate. In Afipia carboxidovorans (strain ATCC 49405 / DSM 1227 / KCTC 32145 / OM5) (Oligotropha carboxidovorans), this protein is Sulfite reductase [NADPH] hemoprotein beta-component.